Consider the following 693-residue polypeptide: Follicle-stimulating hormone receptor (693 aa).

An N-terminal signal peptide occupies residues 1–18 (MFLVFTCSLILLASCSSC). Cystine bridges form between C18/C25 and C23/C32. An LRRNT domain is found at 19 to 46 (QHHTCHCAGRIFICQESKVVQLPRDIPT). Topologically, residues 19-366 (QHHTCHCAGR…EDIMGYTILR (348 aa)) are extracellular. N47 carries N-linked (GlcNAc...) asparagine glycosylation. 9 LRR repeats span residues 49–72 (TELRFVLTKMRVIPKGAFAGLLDL), 73–97 (EKIEISQNDALEVIEAKVFSNLPKL), 98–118 (HEIRIEKANNLVYIDQDAFQH), 119–143 (LPSLRYLLISNTGLRFLPVVQKVHS), 144–169 (FQKVLLDIQDNINIRTIERNSFMGLS), 170–192 (SESVILWLNKNGIQEIENHAFNG), 193–216 (TYLDELNLSDNQNLEKLPNEVFQG), 217–240 (ANGPVVLDISRTKISFLPGHGLEL), and 241–259 (IKKLRARSTYNLKKLPDLS). N-linked (GlcNAc...) asparagine glycosylation is found at N191 and N199. Residue N268 is glycosylated (N-linked (GlcNAc...) asparagine). Intrachain disulfides connect C275–C346, C276–C292, C276–C356, and C292–C338. Residues 367-387 (VLIWFISILAITGNIVVLIIL) traverse the membrane as a helical segment. The Cytoplasmic segment spans residues 388–398 (ISSQYKLTVPR). A helical membrane pass occupies residues 399 to 421 (FLMCNLAFADLCIGIYLLFIASV). Over 422 to 443 (DIQTKSQYYNYAIDWQTGAGCN) the chain is Extracellular. An intrachain disulfide couples C442 to C517. The helical transmembrane segment at 444 to 465 (AAGFFTVFASELSVYTLTVITL) threads the bilayer. The Cytoplasmic segment spans residues 466–485 (ERWHTITYAMQLDRKVRFRH). A helical membrane pass occupies residues 486-508 (AVIIMIFGWMFAFTVALLPIFGV). Topologically, residues 509-528 (SSYMKVSICLPMDIETPFSQ) are extracellular. Residues 529 to 550 (AYVIFLLVLNVLAFVIICACYI) form a helical membrane-spanning segment. Topologically, residues 551 to 573 (CIYFTVRNPNVISSNSDTKIAKR) are cytoplasmic. The chain crosses the membrane as a helical span at residues 574-597 (MAILIFTDFLCMAPISFFAISASL). At 598–608 (KVPLITVSKSK) the chain is on the extracellular side. Residues 609-630 (ILLVLFYPINSCANPFLYAIFT) form a helical membrane-spanning segment. The Cytoplasmic segment spans residues 631-693 (KTFRRDFFIL…YSLVPLNHLN (63 aa)).

The protein belongs to the G-protein coupled receptor 1 family. FSH/LSH/TSH subfamily. Homotrimer. Functions as a homotrimer binding the FSH hormone heterodimer composed of CGA and FSHB.

It is found in the cell membrane. Functionally, g protein-coupled receptor for follitropin, the follicle-stimulating hormone. Through cAMP production activates the downstream PI3K-AKT and ERK1/ERK2 signaling pathways. The sequence is that of Follicle-stimulating hormone receptor (FSHR) from Cairina moschata (Muscovy duck).